A 781-amino-acid polypeptide reads, in one-letter code: Potassium transporter 5 (781 aa).

The segment covering 1 to 11 has biased composition (polar residues); the sequence is MTEPLHTSSNG. The tract at residues 1-24 is disordered; sequence MTEPLHTSSNGGAERGPNAAFESE. Residues 1-63 lie on the Cytoplasmic side of the membrane; the sequence is MTEPLHTSSN…AKVGWATTLH (63 aa). A helical membrane pass occupies residues 64-84; that stretch reads LAFQSIGVVYGDMGTSPLYVF. Topologically, residues 85-100 are extracellular; it reads SSTFTNGIKDTNDILG. The helical transmembrane segment at 101-121 threads the bilayer; it reads VMSLIIYTVVLLPLIKYCFIV. At 122–187 the chain is on the cytoplasmic side; the sequence is LRANDNGDGG…EKMENSPNFK (66 aa). The helical transmembrane segment at 188–208 threads the bilayer; it reads IILFLVTILATSMVIGDGVLT. Residues 209–225 lie on the Extracellular side of the membrane; it reads PCISVLSAVGGIKESAK. Residues 226–246 traverse the membrane as a helical segment; that stretch reads SLTQGQIAGIAIAILIVLFLV. The Cytoplasmic segment spans residues 247–257; the sequence is QRFGTDKVGYS. A helical membrane pass occupies residues 258-278; that stretch reads FGPIILTWFIFIAGTGVYNLF. The Extracellular segment spans residues 279 to 304; sequence KHDTGVLKAFNPKYIVDYFERNGKQG. A helical transmembrane segment spans residues 305–325; it reads WISLGGVILCITGTEAMFADL. At 326–334 the chain is on the cytoplasmic side; the sequence is GHFNVRAIQ. A helical transmembrane segment spans residues 335 to 355; sequence IGFSVVLLPSVLLAYIGQAAY. At 356–381 the chain is on the extracellular side; the sequence is LRIYPEHVADTFYKSIPDPLYWPTFV. Residues 382 to 402 form a helical membrane-spanning segment; that stretch reads VAVAAAIIASQAMISGAFAII. Residues 403–426 lie on the Cytoplasmic side of the membrane; sequence AQSQILGCFPRVRVIHTSTKFHGQ. A helical membrane pass occupies residues 427–447; sequence VYIPEINYVLMVLCVAVTAIF. At 448-458 the chain is on the extracellular side; sequence QTTDKIGNAYG. The chain crosses the membrane as a helical span at residues 459–479; sequence IAVVFVMFITTLLVTLVMVMI. At 480 to 481 the chain is on the cytoplasmic side; sequence WK. A helical transmembrane segment spans residues 482–502; that stretch reads TSLLWIALFPVIFGGAELIYL. Residues 503 to 512 lie on the Extracellular side of the membrane; that stretch reads SSAFYKFTQG. Residues 513–533 traverse the membrane as a helical segment; it reads GYLPLVFSAILMFIMATWHYV. Topologically, residues 534 to 781 are cytoplasmic; it reads HVHRYKYELR…LLRVGMTYEI (248 aa). The disordered stretch occupies residues 681–707; sequence VTDPTSEVQDAMSSRNNSDQHTTEPRN. A compositionally biased stretch (polar residues) spans 683-700; the sequence is DPTSEVQDAMSSRNNSDQ.

Belongs to the HAK/KUP transporter (TC 2.A.72.3) family. As to expression, expressed in root epidermis, parenchyma of stele tissue and primordial of the lateral root, root-shoot junctions and leaf sheaths. Expressed in germinated embryonic tissue, young tillers, flower organs and pedicels.

The protein localises to the cell membrane. It catalyses the reaction K(+)(in) = K(+)(out). Functionally, high-affinity potassium transporter. Its potassium transporter activity does not seem to be affected by high sodium and low potassium concentrations in the extracellular environment. Invloved in salt stress tolerance by enhancing root potassium uptake and translocation to the shoot to prevent sodium influx during salt stress. Involved in the positive regulation of disease resistance against the rice grassy stunt virus by promoting potassium transport and increasing endogenous plant potassium. This Oryza sativa subsp. japonica (Rice) protein is Potassium transporter 5 (HAK5).